The following is a 222-amino-acid chain: Triosephosphate isomerase (222 aa).

9–11 serves as a coordination point for substrate; the sequence is NFK. H93 functions as the Electrophile in the catalytic mechanism. E141 serves as the catalytic Proton acceptor. Residues I146, G181, and 202–203 each bind substrate; that span reads AS.

The protein belongs to the triosephosphate isomerase family. Homotetramer; dimer of dimers.

It localises to the cytoplasm. The catalysed reaction is D-glyceraldehyde 3-phosphate = dihydroxyacetone phosphate. Its pathway is carbohydrate biosynthesis; gluconeogenesis. It participates in carbohydrate degradation; glycolysis; D-glyceraldehyde 3-phosphate from glycerone phosphate: step 1/1. In terms of biological role, involved in the gluconeogenesis. Catalyzes stereospecifically the conversion of dihydroxyacetone phosphate (DHAP) to D-glyceraldehyde-3-phosphate (G3P). The chain is Triosephosphate isomerase from Methanothermus fervidus (strain ATCC 43054 / DSM 2088 / JCM 10308 / V24 S).